Here is a 104-residue protein sequence, read N- to C-terminus: UPF0235 protein M446_3939 (104 aa).

This sequence belongs to the UPF0235 family.

The chain is UPF0235 protein M446_3939 from Methylobacterium sp. (strain 4-46).